Consider the following 87-residue polypeptide: Acyl-CoA-binding protein (87 aa).

The region spanning 3 to 87 (LKEEFEEHAV…KVKQLLEESA (85 aa)) is the ACB domain. An acyl-CoA contacts are provided by residues 30-34 (YGLYK), K56, and Y75.

This sequence belongs to the ACBP family.

Binds medium- and long-chain acyl-CoA esters with very high affinity and may function as an intracellular carrier of acyl-CoA esters. The polypeptide is Acyl-CoA-binding protein (ACABP) (Fritillaria agrestis (Stinkbells)).